Reading from the N-terminus, the 164-residue chain is Phosphopantetheine adenylyltransferase (164 aa).

Thr-10 contacts substrate. ATP contacts are provided by residues 10–11 (TF) and His-18. Substrate-binding residues include Lys-42, Leu-74, and Arg-88. Residues 89–91 (GIR), Glu-99, and 124–130 (YAFVSST) each bind ATP.

The protein belongs to the bacterial CoaD family. As to quaternary structure, homohexamer. Mg(2+) serves as cofactor.

The protein resides in the cytoplasm. It carries out the reaction (R)-4'-phosphopantetheine + ATP + H(+) = 3'-dephospho-CoA + diphosphate. The protein operates within cofactor biosynthesis; coenzyme A biosynthesis; CoA from (R)-pantothenate: step 4/5. Functionally, reversibly transfers an adenylyl group from ATP to 4'-phosphopantetheine, yielding dephospho-CoA (dPCoA) and pyrophosphate. The chain is Phosphopantetheine adenylyltransferase from Tolumonas auensis (strain DSM 9187 / NBRC 110442 / TA 4).